Consider the following 138-residue polypeptide: Small ribosomal subunit protein uS12 (138 aa).

The segment at 33–55 (KEHTNVSSPQKRGVCTRVGTMTP) is disordered. At Asp102 the chain carries 3-methylthioaspartic acid.

The protein belongs to the universal ribosomal protein uS12 family. In terms of assembly, part of the 30S ribosomal subunit. Contacts proteins S8 and S17. May interact with IF1 in the 30S initiation complex.

Its function is as follows. With S4 and S5 plays an important role in translational accuracy. In terms of biological role, interacts with and stabilizes bases of the 16S rRNA that are involved in tRNA selection in the A site and with the mRNA backbone. Located at the interface of the 30S and 50S subunits, it traverses the body of the 30S subunit contacting proteins on the other side and probably holding the rRNA structure together. The combined cluster of proteins S8, S12 and S17 appears to hold together the shoulder and platform of the 30S subunit. This Bacillus velezensis (strain DSM 23117 / BGSC 10A6 / LMG 26770 / FZB42) (Bacillus amyloliquefaciens subsp. plantarum) protein is Small ribosomal subunit protein uS12.